A 291-amino-acid chain; its full sequence is Geranyl diphosphate 2-C-methyltransferase (291 aa).

The protein belongs to the geranyl diphosphate 2-C-methyltransferase family. Requires Mg(2+) as cofactor.

It carries out the reaction (2E)-geranyl diphosphate + S-adenosyl-L-methionine = (E)-2-methylgeranyl diphosphate + S-adenosyl-L-homocysteine + H(+). Functionally, catalyzes the SAM-dependent methylation of geranyl diphosphate (GPP) to yield (E)-2-methylgeranyl diphosphate (2-MeGPP). This Streptomyces ambofaciens (strain ATCC 23877 / 3486 / DSM 40053 / JCM 4204 / NBRC 12836 / NRRL B-2516) protein is Geranyl diphosphate 2-C-methyltransferase.